The primary structure comprises 344 residues: Phosphoribosylformylglycinamidine cyclo-ligase (344 aa).

Belongs to the AIR synthase family.

The protein resides in the cytoplasm. The catalysed reaction is 2-formamido-N(1)-(5-O-phospho-beta-D-ribosyl)acetamidine + ATP = 5-amino-1-(5-phospho-beta-D-ribosyl)imidazole + ADP + phosphate + H(+). Its pathway is purine metabolism; IMP biosynthesis via de novo pathway; 5-amino-1-(5-phospho-D-ribosyl)imidazole from N(2)-formyl-N(1)-(5-phospho-D-ribosyl)glycinamide: step 2/2. This is Phosphoribosylformylglycinamidine cyclo-ligase from Exiguobacterium sp. (strain ATCC BAA-1283 / AT1b).